Here is a 158-residue protein sequence, read N- to C-terminus: Protein SREK1IP1 (158 aa).

2 disordered regions span residues 1–20 (MAAP…RCGY) and 45–158 (SSTS…SDTD). The segment at 13-30 (AGCKRCGYPGHLTFECRN) adopts a CCHC-type zinc-finger fold. Basic and acidic residues predominate over residues 59–79 (ALSKEKIFGSHSKGSQEDSRK). Basic residues-rich tracts occupy residues 80-98 (EKHK…KKRS) and 111-140 (KKKK…KQKK). Positions 145–158 (SSSSDSSSESSDTD) are enriched in low complexity.

In terms of biological role, possible splicing regulator involved in the control of cellular survival. This is Protein SREK1IP1 (srek1ip1) from Danio rerio (Zebrafish).